We begin with the raw amino-acid sequence, 1679 residues long: Probable myosin heavy chain ECU04_1000 (1679 aa).

The span at 1-14 shows a compositional bias: polar residues; that stretch reads MEGTTNKDIGSGSS. The interval 1–22 is disordered; the sequence is MEGTTNKDIGSGSSRPGGEVSV. The 49-residue stretch at 31–79 folds into the Myosin N-terminal SH3-like domain; sequence MEKKWVWAPSSKEAYVCGFVVKEEGDVLEIDCRGVIVRHKSCEVFRMNP. Residues 83–754 enclose the Myosin motor domain; that stretch reads DMVDDLAELS…VLADIEDMRD (672 aa). Residue 176-183 coordinates ATP; that stretch reads GESGAGKT. Residues 624 to 646 are actin-binding; it reads LASLMSELRRTNPHFVRCIIPNL. Positions 823–1644 form a coiled coil; that stretch reads GEMKEKEAMI…SKMLEMKKKL (822 aa).

The protein belongs to the TRAFAC class myosin-kinesin ATPase superfamily. Myosin family.

Functionally, cellular myosin that appears to play a role in cytokinesis, cell shape, and specialized functions such as secretion and capping. The chain is Probable myosin heavy chain ECU04_1000 from Encephalitozoon cuniculi (strain GB-M1) (Microsporidian parasite).